A 293-amino-acid chain; its full sequence is uncharacterized protein (293 aa).

Disordered regions lie at residues Asn-121 to Ser-154 and Asp-254 to Gln-274. Residues Ser-133 to Ser-149 show a composition bias toward basic residues. Residues Pro-260 to Gln-272 show a composition bias toward pro residues.

This is an uncharacterized protein from Dictyostelium discoideum (Social amoeba).